We begin with the raw amino-acid sequence, 298 residues long: HTH-type transcriptional regulator TsaR (298 aa).

Residues M1–T58 form the HTH lysR-type domain. Positions L18–Q37 form a DNA-binding region, H-T-H motif. Toluene-4-sulfonate-binding residues include S98 and A100.

Belongs to the LysR transcriptional regulatory family. As to quaternary structure, homotetramer. Dimer of dimers related by a twofold axis.

Its activity is regulated as follows. Sensitive to oxygen. Its function is as follows. Regulates expression of the tsaMBCD1 operon and of tsaT in response to p-toluenesulfonate (TSA). Acts by binding directly to the promoter region. Binding to the tsa promoter depends on TSA concentration. In Comamonas testosteroni (Pseudomonas testosteroni), this protein is HTH-type transcriptional regulator TsaR (tsaR).